A 300-amino-acid chain; its full sequence is Phosphoribosylaminoimidazole-succinocarboxamide synthase (300 aa).

Belongs to the SAICAR synthetase family.

The enzyme catalyses 5-amino-1-(5-phospho-D-ribosyl)imidazole-4-carboxylate + L-aspartate + ATP = (2S)-2-[5-amino-1-(5-phospho-beta-D-ribosyl)imidazole-4-carboxamido]succinate + ADP + phosphate + 2 H(+). It functions in the pathway purine metabolism; IMP biosynthesis via de novo pathway; 5-amino-1-(5-phospho-D-ribosyl)imidazole-4-carboxamide from 5-amino-1-(5-phospho-D-ribosyl)imidazole-4-carboxylate: step 1/2. This is Phosphoribosylaminoimidazole-succinocarboxamide synthase from Methylibium petroleiphilum (strain ATCC BAA-1232 / LMG 22953 / PM1).